A 181-amino-acid polypeptide reads, in one-letter code: NQKCSGNPRRYNGKSCASTTNYHDSHKGACGCGPASGDAQFGWNAGSFVAAASQMYFDSGNKGWCGQHCGQCIKLTTTGGYVPGQGGPVREGLSKTFMITNLCPNIYPNQDWCNQGSQYGGHNKYGYELHLDLENGRSQVTGMGWNNPETTWEVVNCDSEHNHDHRTPSNSMYGQCQCAHQ.

Cysteine 4 and cysteine 16 form a disulfide bridge. The active-site Nucleophile is aspartate 24. 5 disulfide bridges follow: cysteine 30–cysteine 69, cysteine 32–cysteine 176, cysteine 65–cysteine 178, cysteine 72–cysteine 157, and cysteine 103–cysteine 113. Residue aspartate 132 is the Proton donor of the active site.

In terms of tissue distribution, digestive gland.

It catalyses the reaction Endohydrolysis of (1-&gt;4)-beta-D-glucosidic linkages in cellulose, lichenin and cereal beta-D-glucans.. Its function is as follows. Active towards the soluble carboxymethylcellulose (CMC). Possesses expansin activity too. This Mytilus edulis (Blue mussel) protein is Endoglucanase.